Here is a 436-residue protein sequence, read N- to C-terminus: Prenyltransferase nscD (436 aa).

The protein belongs to the tryptophan dimethylallyltransferase family.

It functions in the pathway secondary metabolite biosynthesis. Prenyltransferase; part of the gene cluster that mediates the biosynthesis of neosartoricin B, a prenylated anthracenone that probably exhibits T-cell antiproliferative activity, suggestive of a physiological role as an immunosuppressive agent. The non-reducing polyketide synthase nscA probably synthesizes and cyclizes the decaketide backbone. The hydrolase nscB then mediates the product release through hydrolysis followed by spontaneous decarboxylation. The prenyltransferase nscD catalyzes the addition of the dimethylallyl group to the aromatic C5. The FAD-dependent monooxygenase nscC is then responsible for the stereospecific hydroxylation at C2. Neosartoricin B can be converted into two additional compounds neosartoricins C and D. Neosartoricin C is a spirocyclic compound that is cyclized through the attack of C3 hydroxyl on C14, followed by dehydration. On the other hand, neosartoricin D is a further cyclized compound in which attack of C2 on C14 in neosartoricin C results in the formation of the acetal-containing dioxabicyclo-octanone ring. Both of these compounds are novel and possibly represent related metabolites of the gene cluster. This is Prenyltransferase nscD from Arthroderma otae (strain ATCC MYA-4605 / CBS 113480) (Microsporum canis).